The chain runs to 375 residues: Succinyl-diaminopimelate desuccinylase (375 aa).

Position 66 (H66) interacts with Zn(2+). The active site involves D68. D99 is a binding site for Zn(2+). E133 (proton acceptor) is an active-site residue. E134, E162, and H348 together coordinate Zn(2+).

This sequence belongs to the peptidase M20A family. DapE subfamily. Homodimer. The cofactor is Zn(2+). Co(2+) is required as a cofactor.

The enzyme catalyses N-succinyl-(2S,6S)-2,6-diaminopimelate + H2O = (2S,6S)-2,6-diaminopimelate + succinate. It participates in amino-acid biosynthesis; L-lysine biosynthesis via DAP pathway; LL-2,6-diaminopimelate from (S)-tetrahydrodipicolinate (succinylase route): step 3/3. In terms of biological role, catalyzes the hydrolysis of N-succinyl-L,L-diaminopimelic acid (SDAP), forming succinate and LL-2,6-diaminopimelate (DAP), an intermediate involved in the bacterial biosynthesis of lysine and meso-diaminopimelic acid, an essential component of bacterial cell walls. In Escherichia coli O157:H7, this protein is Succinyl-diaminopimelate desuccinylase.